A 635-amino-acid polypeptide reads, in one-letter code: Threonine--tRNA ligase (635 aa).

A TGS domain is found at 1–61 (MPVIRLPDGS…TDDADLSIIT (61 aa)). The tract at residues 242–533 (DHRKLGRQLD…LIENYAGAMP (292 aa)) is catalytic. Cysteine 333, histidine 384, and histidine 510 together coordinate Zn(2+).

It belongs to the class-II aminoacyl-tRNA synthetase family. Homodimer. Requires Zn(2+) as cofactor.

Its subcellular location is the cytoplasm. The catalysed reaction is tRNA(Thr) + L-threonine + ATP = L-threonyl-tRNA(Thr) + AMP + diphosphate + H(+). Its function is as follows. Catalyzes the attachment of threonine to tRNA(Thr) in a two-step reaction: L-threonine is first activated by ATP to form Thr-AMP and then transferred to the acceptor end of tRNA(Thr). Also edits incorrectly charged L-seryl-tRNA(Thr). In Methylobacillus flagellatus (strain ATCC 51484 / DSM 6875 / VKM B-1610 / KT), this protein is Threonine--tRNA ligase.